A 1365-amino-acid polypeptide reads, in one-letter code: Nuclear pore complex protein Nup154 (1365 aa).

Positions 1-508 (MTLPQAQLDF…GTHIIEVLKM (508 aa)) are required for binding to Nup93-1 and anchoring to the nuclear pore complex. The interval 508-986 (MVDVLRQILL…KSINPLKGTA (479 aa)) is required for binding to chromatin.

It belongs to the non-repetitive/WGA-negative nucleoporin family. Interacts (via N-terminus) with Nup93-1. Interacts with Nup35. Interacts with cup.

The protein localises to the nucleus. It is found in the nuclear pore complex. Its subcellular location is the chromosome. It localises to the nucleus membrane. The protein resides in the cytoplasm. In terms of biological role, component of the nuclear pore complex. Has a role in the organization of the inner nuclear membrane proteins at the nuclear envelope. In germ cells, plays a role in the nuclear localization of components of the dpp signaling pathways, such as Medea and phosphorylated Mad. Binds to chromatin, and together with Nup62 and Nup93-1, contributes to karyosome morphology and chromatin organization including attachment to the nuclear envelope in oocytes and nurse cells. Has a role in female fertility including egg chamber development; in nurse cells, has a role in the organization of F-actin in subcortical and cytoplasmic actin filaments important for the transfer of cytoplasm from nurse cells to the growing oocytes. Has a role in male spermatogenesis and fertility. Has a role in germ line cell proliferation. The chain is Nuclear pore complex protein Nup154 from Drosophila melanogaster (Fruit fly).